The sequence spans 3901 residues: Nonribosomal peptide synthetase opaA (3901 aa).

Positions 248–641 are adenylation 1; sequence HNAQHHPSVV…HRKDNQIKIR (394 aa). The Carrier 1 domain maps to 780 to 854; that stretch reads LPVTANEIVV…DMATRLTRIK (75 aa). At Ser815 the chain carries O-(pantetheine 4'-phosphoryl)serine. The tract at residues 891–1164 is condensation 1; it reads DAYPCSALQE…IATVPIRINL (274 aa). The interval 1328–1725 is adenylation 2; that stretch reads QSHAQKTPKS…GRIGNQVKLR (398 aa). The 79-residue stretch at 1858 to 1936 folds into the Carrier 2 domain; the sequence is RTPLDTERDL…QIAAQAATRA (79 aa). Ser1895 is modified (O-(pantetheine 4'-phosphoryl)serine). The epimerase stretch occupies residues 1953–2261; that stretch reads KLTPIQQLFF…KDARRRLTRN (309 aa). The condensation 2 stretch occupies residues 2403-2826; sequence ENLYPCAPIQ…LVSTDHKRLL (424 aa). The adenylation 3 stretch occupies residues 2846-3243; it reads QQHVRETPDA…GRKDSQIKIR (398 aa). In terms of domain architecture, Carrier 3 spans 3375-3451; it reads LPSTAGEQLL…ALAARSRSKD (77 aa). At Ser3412 the chain carries O-(pantetheine 4'-phosphoryl)serine. Positions 3509 to 3837 are condensation 3; the sequence is HHFSFAVEGK…EDLKTHFTLN (329 aa).

The protein belongs to the NRP synthetase family.

Nonribosomal peptide synthetase; part of the gene cluster that mediates the biosynthesis of oxepinamides, derivatives of anthranilyl-containing tripeptides that share an oxepin ring and a fused pyrimidinone moiety. The nonribosomal peptide synthetase (NRPS) opaA assembles the quinazolinone core with D-Phe incorporation. The first adenylation domain (A1) of opaA loads and activates anthranilic acid whereas the second A domain (A2) is for activating of L-Phe, which is then converted to D-form by the E domain. The third A domain (A3) is responsible for L-Ile activation and the terminal condensation domain C3 for cyclization and releasing the NRPS product protuboxepin K. The cytochrome P450 monooxygenase opaB then catalyzes alone the oxepin ring formation to convert protuboxepin K into protuboxepin A. The flavoenzyme opaC installs subsequently one hydroxyl group at the oxepin ring, accompanied by double bond migration, to form 15-epi-oxepinamide E. The epimerase opaE changes the D-Phe residue back to L-form, leading to oxepinamide E, which is further methylated at the hydroxyl group at C-12 by the O-methyltransferase OpaF to yield oxepinamide F. This chain is Nonribosomal peptide synthetase opaA, found in Aspergillus ustus.